The following is a 280-amino-acid chain: 3-methyl-2-oxobutanoate hydroxymethyltransferase (280 aa).

2 residues coordinate Mg(2+): Asp-45 and Asp-84. 3-methyl-2-oxobutanoate contacts are provided by residues 45-46 (DS), Asp-84, and Lys-114. Glu-116 lines the Mg(2+) pocket. Catalysis depends on Glu-183, which acts as the Proton acceptor.

This sequence belongs to the PanB family. In terms of assembly, homodecamer; pentamer of dimers. It depends on Mg(2+) as a cofactor.

It is found in the cytoplasm. The catalysed reaction is 3-methyl-2-oxobutanoate + (6R)-5,10-methylene-5,6,7,8-tetrahydrofolate + H2O = 2-dehydropantoate + (6S)-5,6,7,8-tetrahydrofolate. The protein operates within cofactor biosynthesis; (R)-pantothenate biosynthesis; (R)-pantoate from 3-methyl-2-oxobutanoate: step 1/2. Its function is as follows. Catalyzes the reversible reaction in which hydroxymethyl group from 5,10-methylenetetrahydrofolate is transferred onto alpha-ketoisovalerate to form ketopantoate. This Clostridium kluyveri (strain ATCC 8527 / DSM 555 / NBRC 12016 / NCIMB 10680 / K1) protein is 3-methyl-2-oxobutanoate hydroxymethyltransferase.